Reading from the N-terminus, the 536-residue chain is 3',5'-cyclic-AMP phosphodiesterase 4C (536 aa).

The tract at residues 49 to 69 is disordered; the sequence is QALLGTPPQSSQQAAPAEESG. The region spanning 178-507 is the PDEase domain; that stretch reads VQTDQEEQLA…EWYQSRVPCS (330 aa). H254 acts as the Proton donor in catalysis. H254 provides a ligand contact to 3',5'-cyclic AMP. AMP is bound by residues H254 and H258. The Zn(2+) site is built by H258, H294, D295, and D412. AMP contacts are provided by D295, D412, Q463, and F466. A Mg(2+)-binding site is contributed by D295. D295 lines the Mn(2+) pocket. Residues Q463 and F466 each coordinate 3',5'-cyclic AMP. S507 is modified (phosphoserine).

This sequence belongs to the cyclic nucleotide phosphodiesterase family. PDE4 subfamily. In terms of assembly, part of a complex containing AKAP5, ADCY5, ADCY6 and PKD2. Zn(2+) is required as a cofactor. Mg(2+) serves as cofactor. Requires Mn(2+) as cofactor.

Its subcellular location is the cell projection. It is found in the cilium. It catalyses the reaction 3',5'-cyclic AMP + H2O = AMP + H(+). The protein operates within purine metabolism; 3',5'-cyclic AMP degradation; AMP from 3',5'-cyclic AMP: step 1/1. Its function is as follows. Hydrolyzes the second messenger cAMP, which is a key regulator of many important physiological processes. The polypeptide is 3',5'-cyclic-AMP phosphodiesterase 4C (Rattus norvegicus (Rat)).